We begin with the raw amino-acid sequence, 288 residues long: dTDP-4-keto-6-deoxy-D-glucose reductase (288 aa).

NADH is bound by residues 12-14 (GML), 38-39 (DI), 62-64 (AWT), Y127, and K131. NADPH is bound by residues 13–14 (ML), 38–39 (DI), 62–64 (AWT), Y127, and K131. The active-site Proton donor/acceptor is Y127.

It belongs to the dTDP-4-dehydrorhamnose reductase family. Requires Mg(2+) as cofactor.

It participates in antibiotic biosynthesis; novobiocin biosynthesis. Functionally, reduces the product formed from the reaction of NovW with dTDP-4-keto-6-deoxy-D-glucose to result in dTDP-5-methyl-L-rhamnose in the novobiocin biosynthesis pathway, an aminocoumarin family antibiotic that targets bacterial DNA gyrases. This chain is dTDP-4-keto-6-deoxy-D-glucose reductase (novS), found in Streptomyces niveus (Streptomyces spheroides).